The following is a 159-amino-acid chain: 3-hydroxyacyl-[acyl-carrier-protein] dehydratase FabZ (159 aa).

H58 is a catalytic residue.

Belongs to the thioester dehydratase family. FabZ subfamily.

It localises to the cytoplasm. The catalysed reaction is a (3R)-hydroxyacyl-[ACP] = a (2E)-enoyl-[ACP] + H2O. Its function is as follows. Involved in unsaturated fatty acids biosynthesis. Catalyzes the dehydration of short chain beta-hydroxyacyl-ACPs and long chain saturated and unsaturated beta-hydroxyacyl-ACPs. This Helicobacter pylori (strain J99 / ATCC 700824) (Campylobacter pylori J99) protein is 3-hydroxyacyl-[acyl-carrier-protein] dehydratase FabZ.